We begin with the raw amino-acid sequence, 326 residues long: Glycerol-3-phosphate dehydrogenase [NAD(P)+] (326 aa).

Positions 13, 33, and 107 each coordinate NADPH. Positions 107, 135, and 137 each coordinate sn-glycerol 3-phosphate. A139 is an NADPH binding site. K190, D243, S253, R254, and N255 together coordinate sn-glycerol 3-phosphate. K190 functions as the Proton acceptor in the catalytic mechanism. An NADPH-binding site is contributed by R254. The NADPH site is built by L273 and E275.

This sequence belongs to the NAD-dependent glycerol-3-phosphate dehydrogenase family.

It localises to the cytoplasm. The catalysed reaction is sn-glycerol 3-phosphate + NAD(+) = dihydroxyacetone phosphate + NADH + H(+). It catalyses the reaction sn-glycerol 3-phosphate + NADP(+) = dihydroxyacetone phosphate + NADPH + H(+). The protein operates within membrane lipid metabolism; glycerophospholipid metabolism. Its function is as follows. Catalyzes the reduction of the glycolytic intermediate dihydroxyacetone phosphate (DHAP) to sn-glycerol 3-phosphate (G3P), the key precursor for phospholipid synthesis. This chain is Glycerol-3-phosphate dehydrogenase [NAD(P)+], found in Brucella ovis (strain ATCC 25840 / 63/290 / NCTC 10512).